A 452-amino-acid polypeptide reads, in one-letter code: Phosphoglucosamine mutase (452 aa).

The active-site Phosphoserine intermediate is the Ser97. Mg(2+)-binding residues include Ser97, Asp236, Asp238, and Asp240. Ser97 is subject to Phosphoserine.

Belongs to the phosphohexose mutase family. Requires Mg(2+) as cofactor. Post-translationally, activated by phosphorylation.

It catalyses the reaction alpha-D-glucosamine 1-phosphate = D-glucosamine 6-phosphate. Its function is as follows. Catalyzes the conversion of glucosamine-6-phosphate to glucosamine-1-phosphate. The sequence is that of Phosphoglucosamine mutase from Prochlorococcus marinus (strain MIT 9515).